Here is a 716-residue protein sequence, read N- to C-terminus: Translation initiation factor IF-2 (716 aa).

The segment at 50 to 136 (YKKGGARAKS…VKPKKELPEK (87 aa)) is disordered. Residues 62 to 84 (PAETNKNKQPQGVNQQSAGNQPN) show a composition bias toward polar residues. Residues 101–113 (KNKKNNNNKKNKR) are compositionally biased toward basic residues. Positions 114 to 126 (NNNNNKNQHQQKP) are enriched in low complexity. Residues 217–386 (IRPPVVTIMG…LLVSEVEELK (170 aa)) enclose the tr-type G domain. A G1 region spans residues 226-233 (GHVDHGKT). 226-233 (GHVDHGKT) contacts GTP. Residues 251–255 (GITQH) are G2. The G3 stretch occupies residues 272–275 (DTPG). GTP is bound by residues 272–276 (DTPGH) and 326–329 (NKID). The tract at residues 326–329 (NKID) is G4. Positions 362 to 364 (SAL) are G5.

This sequence belongs to the TRAFAC class translation factor GTPase superfamily. Classic translation factor GTPase family. IF-2 subfamily.

It is found in the cytoplasm. In terms of biological role, one of the essential components for the initiation of protein synthesis. Protects formylmethionyl-tRNA from spontaneous hydrolysis and promotes its binding to the 30S ribosomal subunits. Also involved in the hydrolysis of GTP during the formation of the 70S ribosomal complex. The sequence is that of Translation initiation factor IF-2 (infB) from Bacillus subtilis (strain 168).